A 326-amino-acid polypeptide reads, in one-letter code: Probable cell division protein WhiA (326 aa).

Residues 275-308 (SLDELGRLADPVMTKDAIAGRIRRLLAMADKRAL) constitute a DNA-binding region (H-T-H motif).

The protein belongs to the WhiA family.

Its function is as follows. Involved in cell division and chromosome segregation. The polypeptide is Probable cell division protein WhiA (Pseudarthrobacter chlorophenolicus (strain ATCC 700700 / DSM 12829 / CIP 107037 / JCM 12360 / KCTC 9906 / NCIMB 13794 / A6) (Arthrobacter chlorophenolicus)).